A 429-amino-acid polypeptide reads, in one-letter code: 3-phosphoshikimate 1-carboxyvinyltransferase (429 aa).

3-phosphoshikimate contacts are provided by K22, S23, and R27. K22 provides a ligand contact to phosphoenolpyruvate. Residues G94 and R122 each contribute to the phosphoenolpyruvate site. The 3-phosphoshikimate site is built by S167, Q169, D315, and K342. A phosphoenolpyruvate-binding site is contributed by Q169. Catalysis depends on D315, which acts as the Proton acceptor. Phosphoenolpyruvate contacts are provided by R346 and R388.

This sequence belongs to the EPSP synthase family. As to quaternary structure, monomer.

It is found in the cytoplasm. It carries out the reaction 3-phosphoshikimate + phosphoenolpyruvate = 5-O-(1-carboxyvinyl)-3-phosphoshikimate + phosphate. It functions in the pathway metabolic intermediate biosynthesis; chorismate biosynthesis; chorismate from D-erythrose 4-phosphate and phosphoenolpyruvate: step 6/7. In terms of biological role, catalyzes the transfer of the enolpyruvyl moiety of phosphoenolpyruvate (PEP) to the 5-hydroxyl of shikimate-3-phosphate (S3P) to produce enolpyruvyl shikimate-3-phosphate and inorganic phosphate. This chain is 3-phosphoshikimate 1-carboxyvinyltransferase, found in Geobacter sp. (strain M21).